A 208-amino-acid polypeptide reads, in one-letter code: 3-demethoxyubiquinol 3-hydroxylase (208 aa).

Residues E57, E87, H90, E139, E171, and H174 each coordinate Fe cation.

Belongs to the COQ7 family. Requires Fe cation as cofactor.

It localises to the cell membrane. It carries out the reaction a 5-methoxy-2-methyl-3-(all-trans-polyprenyl)benzene-1,4-diol + AH2 + O2 = a 3-demethylubiquinol + A + H2O. The protein operates within cofactor biosynthesis; ubiquinone biosynthesis. In terms of biological role, catalyzes the hydroxylation of 2-nonaprenyl-3-methyl-6-methoxy-1,4-benzoquinol during ubiquinone biosynthesis. This chain is 3-demethoxyubiquinol 3-hydroxylase, found in Nitrosomonas eutropha (strain DSM 101675 / C91 / Nm57).